The following is a 156-amino-acid chain: 6,7-dimethyl-8-ribityllumazine synthase (156 aa).

5-amino-6-(D-ribitylamino)uracil-binding positions include phenylalanine 22, 57–59, and 81–83; these read AYE and TVI. 86–87 serves as a coordination point for (2S)-2-hydroxy-3-oxobutyl phosphate; the sequence is GT. Histidine 89 (proton donor) is an active-site residue. Phenylalanine 114 serves as a coordination point for 5-amino-6-(D-ribitylamino)uracil. (2S)-2-hydroxy-3-oxobutyl phosphate is bound at residue arginine 128.

The protein belongs to the DMRL synthase family. As to quaternary structure, forms an icosahedral capsid composed of 60 subunits, arranged as a dodecamer of pentamers.

It carries out the reaction (2S)-2-hydroxy-3-oxobutyl phosphate + 5-amino-6-(D-ribitylamino)uracil = 6,7-dimethyl-8-(1-D-ribityl)lumazine + phosphate + 2 H2O + H(+). Its pathway is cofactor biosynthesis; riboflavin biosynthesis; riboflavin from 2-hydroxy-3-oxobutyl phosphate and 5-amino-6-(D-ribitylamino)uracil: step 1/2. Catalyzes the formation of 6,7-dimethyl-8-ribityllumazine by condensation of 5-amino-6-(D-ribitylamino)uracil with 3,4-dihydroxy-2-butanone 4-phosphate. This is the penultimate step in the biosynthesis of riboflavin. This Salmonella heidelberg (strain SL476) protein is 6,7-dimethyl-8-ribityllumazine synthase.